The sequence spans 576 residues: NADH-quinone oxidoreductase subunit C/D (576 aa).

The segment at M1–R176 is NADH dehydrogenase I subunit C. The NADH dehydrogenase I subunit D stretch occupies residues S200–R576.

This sequence in the N-terminal section; belongs to the complex I 30 kDa subunit family. It in the C-terminal section; belongs to the complex I 49 kDa subunit family. In terms of assembly, NDH-1 is composed of 13 different subunits. Subunits NuoB, CD, E, F, and G constitute the peripheral sector of the complex.

The protein resides in the cell inner membrane. The catalysed reaction is a quinone + NADH + 5 H(+)(in) = a quinol + NAD(+) + 4 H(+)(out). Its function is as follows. NDH-1 shuttles electrons from NADH, via FMN and iron-sulfur (Fe-S) centers, to quinones in the respiratory chain. The immediate electron acceptor for the enzyme in this species is believed to be ubiquinone. Couples the redox reaction to proton translocation (for every two electrons transferred, four hydrogen ions are translocated across the cytoplasmic membrane), and thus conserves the redox energy in a proton gradient. The sequence is that of NADH-quinone oxidoreductase subunit C/D from Sulfurihydrogenibium sp. (strain YO3AOP1).